We begin with the raw amino-acid sequence, 41 residues long: Photosystem I reaction center subunit VIII (41 aa).

A helical membrane pass occupies residues 12–32 (WIMIPVTCWLFPVVVMGLLFI).

The protein belongs to the PsaI family.

The protein localises to the cellular thylakoid membrane. May help in the organization of the PsaL subunit. In Cyanothece sp. (strain PCC 7425 / ATCC 29141), this protein is Photosystem I reaction center subunit VIII.